Here is a 197-residue protein sequence, read N- to C-terminus: ATP-dependent Clp protease proteolytic subunit 1 (197 aa).

Residue Ser-88 is the Nucleophile of the active site. His-113 is a catalytic residue.

The protein belongs to the peptidase S14 family. Fourteen ClpP subunits assemble into 2 heptameric rings which stack back to back to give a disk-like structure with a central cavity, resembling the structure of eukaryotic proteasomes.

Its subcellular location is the cytoplasm. The catalysed reaction is Hydrolysis of proteins to small peptides in the presence of ATP and magnesium. alpha-casein is the usual test substrate. In the absence of ATP, only oligopeptides shorter than five residues are hydrolyzed (such as succinyl-Leu-Tyr-|-NHMec, and Leu-Tyr-Leu-|-Tyr-Trp, in which cleavage of the -Tyr-|-Leu- and -Tyr-|-Trp bonds also occurs).. In terms of biological role, cleaves peptides in various proteins in a process that requires ATP hydrolysis. Has a chymotrypsin-like activity. Plays a major role in the degradation of misfolded proteins. This chain is ATP-dependent Clp protease proteolytic subunit 1, found in Leifsonia xyli subsp. xyli (strain CTCB07).